A 254-amino-acid polypeptide reads, in one-letter code: Pyridoxine 5'-phosphate synthase (254 aa).

Residue Asn12 coordinates 3-amino-2-oxopropyl phosphate. 14–15 (DH) is a 1-deoxy-D-xylulose 5-phosphate binding site. Arg23 serves as a coordination point for 3-amino-2-oxopropyl phosphate. Catalysis depends on His48, which acts as the Proton acceptor. The 1-deoxy-D-xylulose 5-phosphate site is built by Arg50 and His55. The active-site Proton acceptor is Glu75. 1-deoxy-D-xylulose 5-phosphate is bound at residue Thr105. Residue His199 is the Proton donor of the active site. 3-amino-2-oxopropyl phosphate-binding positions include Gly200 and 221–222 (GF).

Belongs to the PNP synthase family. Homooctamer; tetramer of dimers.

Its subcellular location is the cytoplasm. It carries out the reaction 3-amino-2-oxopropyl phosphate + 1-deoxy-D-xylulose 5-phosphate = pyridoxine 5'-phosphate + phosphate + 2 H2O + H(+). The protein operates within cofactor biosynthesis; pyridoxine 5'-phosphate biosynthesis; pyridoxine 5'-phosphate from D-erythrose 4-phosphate: step 5/5. In terms of biological role, catalyzes the complicated ring closure reaction between the two acyclic compounds 1-deoxy-D-xylulose-5-phosphate (DXP) and 3-amino-2-oxopropyl phosphate (1-amino-acetone-3-phosphate or AAP) to form pyridoxine 5'-phosphate (PNP) and inorganic phosphate. The chain is Pyridoxine 5'-phosphate synthase from Rhodopseudomonas palustris (strain ATCC BAA-98 / CGA009).